The primary structure comprises 601 residues: Serine/threonine-protein phosphatase 2A 65 kDa regulatory subunit A beta isoform (601 aa).

At A2 the chain carries N-acetylalanine. 15 HEAT repeats span residues 20–58 (DSLY…GVER), 59–96 (TRSE…GGPD), 97–135 (FAHC…TPVA), 136–173 (LEAY…ASNA), 174–212 (VKAE…ELDS), 213–251 (VKSE…SQDD), 252–290 (LETL…GPKI), 291–333 (TLND…RETI), 334–372 (IMNQ…GKEN), 373–411 (TIEH…GIRQ), 412–450 (LSQS…GVEF), 451–489 (FDEK…GTEW), 490–528 (AQNT…GQEI), 529–567 (TTKQ…DTNA), and 568–601 (LQGE…LALA).

The protein belongs to the phosphatase 2A regulatory subunit A family. As to quaternary structure, PP2A consists of a common heterodimeric core enzyme, composed of a 36 kDa catalytic subunit (subunit C) and a 65 kDa constant regulatory subunit (PR65 or subunit A), that associates with a variety of regulatory subunits. Proteins that associate with the core dimer include three families of regulatory subunits B (the R2/B/PR55/B55, R3/B''/PR72/PR130/PR59 and R5/B'/B56 families), the 48 kDa variable regulatory subunit, viral proteins, and cell signaling molecules. Interacts with IPO9. Interacts with SGO1. Interacts with RAF1.

In terms of biological role, the PR65 subunit of protein phosphatase 2A serves as a scaffolding molecule to coordinate the assembly of the catalytic subunit and a variable regulatory B subunit. The sequence is that of Serine/threonine-protein phosphatase 2A 65 kDa regulatory subunit A beta isoform (PPP2R1B) from Homo sapiens (Human).